Consider the following 282-residue polypeptide: Complement component 1 Q subcomponent-binding protein, mitochondrial (282 aa).

A mitochondrion-targeting transit peptide spans 1–73; sequence MLPLLRCVPR…PCACGCGCGS (73 aa). Residues 76 to 93 form a C1q binding region; sequence TDGDKAFVDFLSDEIKEE. Position 87 is a phosphoserine (serine 87). N6-acetyllysine is present on lysine 91. Residues 138–164 are disordered; that stretch reads SIPPTFDGEEEPSQGQKVEEQEPELTS. Residues 168–213 form an interaction with MAVS region; the sequence is FVVEVIKNDDGKKALVLDCHYPEDEVGQEDEAESDIFSIREVSFQS. Tyrosine 188 carries the post-translational modification Phosphotyrosine. Serine 201 and serine 205 each carry phosphoserine. Threonine 214 is subject to Phosphothreonine.

The protein belongs to the MAM33 family. Homotrimer; three monomers form a donut-shaped structure with an unusually asymmetric charge distribution on the surface. Interacts with CDK13, HRK, VTN, NFYB, ADRA1B, FOXC1, DDX21, DDX50, NCL, SRSF1, SRSF9 and CDKN2A isoform smARF. Interacts with CD93; the association may represent a cell surface C1q receptor. Interacts with KRT1; the association represents a cell surface kininogen receptor. Interacts with CD209; the interaction is indicative for a C1q:C1QBP:CD209 signaling complex. Interacts with FBL and RRP1; the respective interactions with C1QBP are competitive. Probably associates with the mitoribosome. Interacts with MAVS; the interaction occurs upon viral transfection. Interacts with PPIF. Interacts with U2AF1L4. Interacts with PLEKHN1. Interacts with VGF-derived peptide TLQP-21. Interacts with POLGARF which is produced from an alternative reading frame of the POLG gene; the interaction results in nucleolar localization of C1QBP, probably due to prevention of C1QBP maturation and redirection from mitochondria to nucleoli. Interacts with MRE11 and RAD50; forming the MRC (MRE11-RAD50-C1QBP) complex that inhibits the activity of MRE11. As to quaternary structure, (Microbial infection) Interacts with Rubella virus capsid protein; the interaction occurs in mitochondria. Interacts with Rubella virus protease/methyltransferase p150. In terms of assembly, (Microbial infection) Interacts with Staphylococcus aureus protein A/spa. (Microbial infection) Interacts with Staphylococcus aureus protein A/spa, HIV-1 Tat and HCV core protein. As to quaternary structure, (Microbial infection) Interacts with HIV-1 Tat and HCV core protein. In terms of assembly, (Microbial infection) Interacts with L.monocytogenes internalin B. (Microbial infection) Interacts with Epstein-Barr virus EBNA1. In terms of tissue distribution, expressed on cell surface of peripheral blood cells (at protein level); Surface expression is reported for macrophages and monocyte-derived dendritic cells.

The protein resides in the mitochondrion matrix. It localises to the nucleus. The protein localises to the nucleolus. Its subcellular location is the cell membrane. It is found in the secreted. The protein resides in the cytoplasm. Functionally, multifunctional and multicompartmental protein involved in inflammation and infection processes, ribosome biogenesis, protein synthesis in mitochondria, regulation of apoptosis, transcriptional regulation and pre-mRNA splicing. At the cell surface is thought to act as an endothelial receptor for plasma proteins of the complement and kallikrein-kinin cascades. Putative receptor for C1q; specifically binds to the globular 'heads' of C1q thus inhibiting C1; may perform the receptor function through a complex with C1qR/CD93. In complex with cytokeratin-1/KRT1 is a high affinity receptor for kininogen-1/HMWK. Can also bind other plasma proteins, such as coagulation factor XII leading to its autoactivation. May function to bind initially fluid kininogen-1 to the cell membrane. The secreted form may enhance both extrinsic and intrinsic coagulation pathways. It is postulated that the cell surface form requires docking with transmembrane proteins for downstream signaling which might be specific for a cell-type or response. By acting as C1q receptor is involved in chemotaxis of immature dendritic cells and neutrophils and is proposed to signal through CD209/DC-SIGN on immature dendritic cells, through integrin alpha-4/beta-1 during trophoblast invasion of the decidua, and through integrin beta-1 during endothelial cell adhesion and spreading. Signaling involved in inhibition of innate immune response is implicating the PI3K-AKT/PKB pathway. Required for protein synthesis in mitochondria. In mitochondrial translation may be involved in formation of functional 55S mitoribosomes; the function seems to involve its RNA-binding activity. Acts as a RNA modification reader, which specifically recognizes and binds mitochondrial RNAs modified by C5-methylcytosine (m5C) in response to stress, and promotes recruitment of the mitochondrial degradosome complex, leading to their degradation. May be involved in the nucleolar ribosome maturation process; the function may involve the exchange of FBL for RRP1 in the association with pre-ribosome particles. Involved in regulation of RNA splicing by inhibiting the RNA-binding capacity of SRSF1 and its phosphorylation. Is required for the nuclear translocation of splicing factor U2AF1L4. Involved in regulation of CDKN2A- and HRK-mediated apoptosis. Stabilizes mitochondrial CDKN2A isoform smARF. May be involved in regulation of FOXC1 transcriptional activity and NFY/CCAAT-binding factor complex-mediated transcription. May play a role in antibacterial defense as it can bind to cell surface hyaluronan and inhibit Streptococcus pneumoniae hyaluronate lyase. May be involved in modulation of the immune response; ligation by HCV core protein is resulting in suppression of interleukin-12 production in monocyte-derived dendritic cells. Involved in regulation of antiviral response by inhibiting RIGI- and IFIH1-mediated signaling pathways probably involving its association with MAVS after viral infection. Acts as a regulator of DNA repair via homologous recombination by inhibiting the activity of MRE11: interacts with unphosphorylated MRE11 and RAD50 in absence of DNA damage, preventing formation and activity of the MRN complex. Following DNA damage, dissociates from phosphorylated MRE11, allowing formation of the MRN complex. Its function is as follows. (Microbial infection) Involved in HIV-1 replication, presumably by contributing to splicing of viral RNA. In terms of biological role, (Microbial infection) In infection processes acts as an attachment site for microbial proteins, including Listeria monocytogenes internalin B (InlB) and Staphylococcus aureus protein A. (Microbial infection) Involved in replication of Rubella virus. In Homo sapiens (Human), this protein is Complement component 1 Q subcomponent-binding protein, mitochondrial (C1QBP).